Consider the following 20-residue polypeptide: Implantin (20 aa).

This sequence belongs to the EF-1-beta/EF-1-delta family. Phosphorylated. Uterus and embryo.

It is found in the cytoplasm. It localises to the nucleus. In terms of biological role, binds DNA. The chain is Implantin from Mus musculus (Mouse).